We begin with the raw amino-acid sequence, 365 residues long: Probable dual-specificity RNA methyltransferase RlmN (365 aa).

Residue E111 is the Proton acceptor of the active site. The Radical SAM core domain maps to 117–351 (ADDRMTACIS…VNIRRSRGKD (235 aa)). C124 and C356 are disulfide-bonded. C131, C135, and C138 together coordinate [4Fe-4S] cluster. Residues 182-183 (GE), S214, 237-239 (SLH), and N313 each bind S-adenosyl-L-methionine. C356 functions as the S-methylcysteine intermediate in the catalytic mechanism.

This sequence belongs to the radical SAM superfamily. RlmN family. [4Fe-4S] cluster is required as a cofactor.

The protein localises to the cytoplasm. It carries out the reaction adenosine(2503) in 23S rRNA + 2 reduced [2Fe-2S]-[ferredoxin] + 2 S-adenosyl-L-methionine = 2-methyladenosine(2503) in 23S rRNA + 5'-deoxyadenosine + L-methionine + 2 oxidized [2Fe-2S]-[ferredoxin] + S-adenosyl-L-homocysteine. It catalyses the reaction adenosine(37) in tRNA + 2 reduced [2Fe-2S]-[ferredoxin] + 2 S-adenosyl-L-methionine = 2-methyladenosine(37) in tRNA + 5'-deoxyadenosine + L-methionine + 2 oxidized [2Fe-2S]-[ferredoxin] + S-adenosyl-L-homocysteine. Its function is as follows. Specifically methylates position 2 of adenine 2503 in 23S rRNA and position 2 of adenine 37 in tRNAs. The protein is Probable dual-specificity RNA methyltransferase RlmN of Cytophaga hutchinsonii (strain ATCC 33406 / DSM 1761 / CIP 103989 / NBRC 15051 / NCIMB 9469 / D465).